The chain runs to 144 residues: Endoribonuclease YbeY (144 aa).

Zn(2+) is bound by residues His-104, His-108, and His-114.

It belongs to the endoribonuclease YbeY family. Zn(2+) serves as cofactor.

The protein resides in the cytoplasm. In terms of biological role, single strand-specific metallo-endoribonuclease involved in late-stage 70S ribosome quality control and in maturation of the 3' terminus of the 16S rRNA. The chain is Endoribonuclease YbeY from Nitratiruptor sp. (strain SB155-2).